The sequence spans 294 residues: 4-hydroxy-tetrahydrodipicolinate synthase (294 aa).

T47 contributes to the pyruvate binding site. The active-site Proton donor/acceptor is Y135. K163 (schiff-base intermediate with substrate) is an active-site residue. I205 contacts pyruvate.

It belongs to the DapA family. Homotetramer; dimer of dimers.

The protein localises to the cytoplasm. The catalysed reaction is L-aspartate 4-semialdehyde + pyruvate = (2S,4S)-4-hydroxy-2,3,4,5-tetrahydrodipicolinate + H2O + H(+). It participates in amino-acid biosynthesis; L-lysine biosynthesis via DAP pathway; (S)-tetrahydrodipicolinate from L-aspartate: step 3/4. Catalyzes the condensation of (S)-aspartate-beta-semialdehyde [(S)-ASA] and pyruvate to 4-hydroxy-tetrahydrodipicolinate (HTPA). This is 4-hydroxy-tetrahydrodipicolinate synthase from Rickettsia prowazekii (strain Madrid E).